The following is a 217-amino-acid chain: MPVKKRTPLKHKSVSFSDDITQTQHNHHHRKKQNGERPPVFIRKTWLTIPWHLIALVYIYVKVFNNYNTAELLACLVPLQILYTIFQFNKATIYGNKRLKFNYSLAAISILACIVLSIPVVVIIILFGAPLLELLWETWLLALHCSFLAYPAVYSVLNCDFKVGLWKRYFILIVVGCWISCVVIPLDWDRDWQAWPIPIVIGAYLGAFVGFAYGAYL.

The next 2 membrane-spanning stretches (helical) occupy residues Thr-45–Asn-65 and Asn-68–Phe-88. Asn-102 is a glycosylation site (N-linked (GlcNAc...) asparagine). 4 helical membrane-spanning segments follow: residues Ala-107–Phe-127, Leu-134–Tyr-154, Tyr-169–Asp-189, and Ile-197–Leu-217.

The protein belongs to the PIGF family.

It localises to the endoplasmic reticulum membrane. It functions in the pathway glycolipid biosynthesis; glycosylphosphatidylinositol-anchor biosynthesis. Its function is as follows. Acts in the GPI biosynthetic pathway between GlcNAc-PI synthesis and GPI transfer to protein. The polypeptide is Glycosylphosphatidylinositol anchor biosynthesis protein 11 (GPI11) (Candida glabrata (strain ATCC 2001 / BCRC 20586 / JCM 3761 / NBRC 0622 / NRRL Y-65 / CBS 138) (Yeast)).